A 185-amino-acid chain; its full sequence is Elongation factor P (185 aa).

It belongs to the elongation factor P family.

Its subcellular location is the cytoplasm. The protein operates within protein biosynthesis; polypeptide chain elongation. In terms of biological role, involved in peptide bond synthesis. Stimulates efficient translation and peptide-bond synthesis on native or reconstituted 70S ribosomes in vitro. Probably functions indirectly by altering the affinity of the ribosome for aminoacyl-tRNA, thus increasing their reactivity as acceptors for peptidyl transferase. The chain is Elongation factor P from Thermosynechococcus vestitus (strain NIES-2133 / IAM M-273 / BP-1).